A 1138-amino-acid chain; its full sequence is Ras guanine nucleotide exchange factor N (1138 aa).

LRR repeat units lie at residues 1–16, 18–39, and 43–64; these read MSYN…ITQL, HLKS…SYFG, and TLQK…FYLL. 7 disordered regions span residues 126-180, 239-301, 319-360, 389-411, 473-540, 601-643, and 660-680; these read ALKN…SNNN, FNSE…GSRK, NKTH…SDTN, IDSP…SPPQ, GSPT…NNNN, ATTV…TSGS, and MSDV…SQSG. Residues 140 to 158 are compositionally biased toward low complexity; sequence KTKGLHSSSSNINTSNNIT. The segment covering 263–275 has biased composition (polar residues); the sequence is RAQTISGKQPSII. The span at 283–299 shows a compositional bias: gly residues; sequence SGGGSGNNNNSGGGGGS. The segment covering 326–352 has biased composition (low complexity); sequence GHSSSSQSNSTTNTPSISSTPYPTSTI. Residues 393 to 405 are compositionally biased toward basic and acidic residues; sequence RTLERRNSSRDDI. The span at 487–496 shows a compositional bias: pro residues; the sequence is PQHPPPPPPI. Polar residues predominate over residues 498–511; the sequence is DNNQPKLNQSQNLI. Composition is skewed to low complexity over residues 512-540 and 605-634; these read NTNS…NNNN and NSNS…NSPQ. Residues 733-855 form the N-terminal Ras-GEF domain; that stretch reads GVPKVKNITL…LLLNIINMKR (123 aa). The Ras-GEF domain maps to 891–1118; that stretch reads RPHEIARQLT…YSEASKIEEK (228 aa).

Functionally, promotes the exchange of Ras-bound GDP by GTP. May play a role in chemotaxis. This chain is Ras guanine nucleotide exchange factor N (gefN), found in Dictyostelium discoideum (Social amoeba).